The chain runs to 496 residues: Zinc finger protein PLAGL2 (496 aa).

6 consecutive C2H2-type zinc fingers follow at residues 68–92 (YSCPQLHCGKAFASKYKLYRHMATH), 98–120 (HQCMYCDKMFHRKDHLRNHLQTH), 127–149 (LHCSECGKNYNTKLGYRRHLAMH), 156–178 (LSCKVCLQTFESTQALLEHLKAH), 191–213 (HPCDHCDRRFYTRKDVRRHLVVH), and 219–242 (FLCQYCAQRFGRKDHLTRHVKKSH).

The protein belongs to the krueppel C2H2-type zinc-finger protein family.

It localises to the nucleus. Functionally, shows weak transcriptional activatory activity. The chain is Zinc finger protein PLAGL2 (PLAGL2) from Homo sapiens (Human).